The sequence spans 1440 residues: Protein lin-15B (1440 aa).

Disordered stretches follow at residues 1–22 (MQTL…SSSS), 48–67 (ILRH…HLDA), 618–660 (PKEE…GRPI), and 738–769 (KDEP…PSSY). Residues 10–22 (TSNPASIPTSSSS) show a composition bias toward low complexity. Residues 631–646 (STSSPATSSPTIIRPR) show a composition bias toward low complexity. Residues 757–767 (NRTTASSQGPS) are compositionally biased toward polar residues. The THAP-type zinc finger occupies 1135–1209 (NPGVCCFCSK…LLKGMIPDAA (75 aa)). Disordered stretches follow at residues 1239–1281 (AIDL…EPSQ), 1298–1350 (RELS…GTSQ), and 1395–1440 (FADE…PSNE). Over residues 1254–1264 (TQEEEEEEEYE) the composition is skewed to acidic residues. Residues 1317 to 1329 (PNPRGRPRKYPKN) constitute a DNA-binding region (a.T hook 1). Acidic residues predominate over residues 1396-1407 (ADEEEEEEEYEE). The segment at residues 1418–1430 (GRPVGRPRKDANK) is a DNA-binding region (a.T hook 2).

Synthetic multivulva (synMuv) class B protein. SynMuv proteins are required to repress the induction of vulval development. Acts redundantly with SynMuv class A protein lin-15A to negatively regulate vulval development. Regulates let-23 basal activity. In Caenorhabditis elegans, this protein is Protein lin-15B.